Reading from the N-terminus, the 642-residue chain is Threonine--tRNA ligase (642 aa).

The TGS domain maps to 1-61 (MPVITLPDGS…DTDSELSIIT (61 aa)). A catalytic region spans residues 243 to 534 (DHRKIGKQLD…LIEEYAGKFP (292 aa)). Residues C334, H385, and H511 each contribute to the Zn(2+) site.

This sequence belongs to the class-II aminoacyl-tRNA synthetase family. As to quaternary structure, homodimer. The cofactor is Zn(2+).

Its subcellular location is the cytoplasm. It carries out the reaction tRNA(Thr) + L-threonine + ATP = L-threonyl-tRNA(Thr) + AMP + diphosphate + H(+). Catalyzes the attachment of threonine to tRNA(Thr) in a two-step reaction: L-threonine is first activated by ATP to form Thr-AMP and then transferred to the acceptor end of tRNA(Thr). Also edits incorrectly charged L-seryl-tRNA(Thr). The chain is Threonine--tRNA ligase from Shewanella woodyi (strain ATCC 51908 / MS32).